Here is a 167-residue protein sequence, read N- to C-terminus: Large ribosomal subunit protein uL10 (167 aa).

It belongs to the universal ribosomal protein uL10 family. In terms of assembly, part of the ribosomal stalk of the 50S ribosomal subunit. The N-terminus interacts with L11 and the large rRNA to form the base of the stalk. The C-terminus forms an elongated spine to which L12 dimers bind in a sequential fashion forming a multimeric L10(L12)X complex.

Functionally, forms part of the ribosomal stalk, playing a central role in the interaction of the ribosome with GTP-bound translation factors. This is Large ribosomal subunit protein uL10 from Flavobacterium johnsoniae (strain ATCC 17061 / DSM 2064 / JCM 8514 / BCRC 14874 / CCUG 350202 / NBRC 14942 / NCIMB 11054 / UW101) (Cytophaga johnsonae).